The sequence spans 839 residues: Homeobox-leucine zipper protein HOX10 (839 aa).

Disordered stretches follow at residues 1–24 (MAAA…SGMD) and 132–157 (QNTP…RDAS). Residues 24–87 (DSGKYVRYTP…NRRCRDKQRK (64 aa)) constitute a DNA-binding region (homeobox). A coiled-coil region spans residues 91–134 (RLQAVNRKLTAMNKLLMEENERLQKQVSQLVHENAHMRQQLQNT). An START domain is found at 155–383 (DASNPSGLLS…IAQETSGEVV (229 aa)).

It belongs to the HD-ZIP homeobox family. Class III subfamily. As to expression, expressed in stems, leaf sheaths and blades and panicles.

It is found in the nucleus. Functionally, probable transcription factor. The chain is Homeobox-leucine zipper protein HOX10 (HOX10) from Oryza sativa subsp. japonica (Rice).